The primary structure comprises 152 residues: UPF0178 protein YaiI (152 aa).

It belongs to the UPF0178 family.

The sequence is that of UPF0178 protein YaiI from Shigella boydii serotype 18 (strain CDC 3083-94 / BS512).